Consider the following 628-residue polypeptide: MDPGIANHTLPEEFEEVVVPEMLEKEVGAKVDVKPTLTTSSPAPSYIELIDPGVHNIEIYAEMYNRPIYRVALFFSLFLIAYAYGLDGNIRYTFQAYATSSYSQHSLLSTVNCIKTVIAAVGQIFFARLSDIFGRFSIMIVSIIFYSMGTIIESQAVNITRFAVGGCFYQLGLTGIILILEVIASDFSNLNWRLLALFIPALPFIINTWISGNVTSAIDANWKWGIGMWAFILPLACIPLGICMLHMRYLARKHAKDRLKPEFEALNKLKWKSFCIDIAFWKLDIIGMLLITVFFGCVLVPFTLAGGLKEEWKTAHIIVPEVIGWVVVLPLYMLWEIKYSRHPLTPWDLIQDRGIFFALLIAFFINFNWYMQGDYMYTVLVVAVHESIKSATRITSLYSFVSVIVGTILGFILIKVRRTKPFIIFGISCWIVSFGLLVHYRGDSGAHSGIIGSLCLLGFGAGSFTYVTQASIQASAKTHARMAVVTSLYLATYNIGSAFGSSVSGAVWTNILPKEISKRISDPTLAAQAYGSPFTFITTYTWGTPERIALVMSYRYVQKILCIIGLVFCFPLLGCAFMLRNHKLTDSIALEGNDHLESKNTFEIEEKEESFLKNKFFTHFTSSKDRKD.

14 helical membrane passes run 68 to 88, 107 to 127, 132 to 152, 164 to 184, 194 to 214, 225 to 245, 285 to 305, 317 to 337, 354 to 374, 394 to 414, 420 to 440, 448 to 468, 488 to 508, and 559 to 579; these read IYRV…GLDG, LLST…IFFA, IFGR…GTII, VGGC…EVIA, LLAL…SGNV, GIGM…ICML, IIGM…FTLA, IIVP…LWEI, GIFF…MQGD, ITSL…FILI, KPFI…LVHY, SGII…TYVT, LYLA…GAVW, and KILC…AFML.

It belongs to the major facilitator superfamily.

It is found in the endosome membrane. Involved in the transport of siderophore ferrioxamine B and so has a role in iron homeostasis. This is Siderophore iron transporter 1 (SIT1) from Saccharomyces cerevisiae (strain ATCC 204508 / S288c) (Baker's yeast).